We begin with the raw amino-acid sequence, 264 residues long: Acyl-[acyl-carrier-protein]--UDP-N-acetylglucosamine O-acyltransferase (264 aa).

This sequence belongs to the transferase hexapeptide repeat family. LpxA subfamily. In terms of assembly, homotrimer.

It localises to the cytoplasm. The catalysed reaction is a (3R)-hydroxyacyl-[ACP] + UDP-N-acetyl-alpha-D-glucosamine = a UDP-3-O-[(3R)-3-hydroxyacyl]-N-acetyl-alpha-D-glucosamine + holo-[ACP]. Its pathway is glycolipid biosynthesis; lipid IV(A) biosynthesis; lipid IV(A) from (3R)-3-hydroxytetradecanoyl-[acyl-carrier-protein] and UDP-N-acetyl-alpha-D-glucosamine: step 1/6. Involved in the biosynthesis of lipid A, a phosphorylated glycolipid that anchors the lipopolysaccharide to the outer membrane of the cell. This Rickettsia felis (strain ATCC VR-1525 / URRWXCal2) (Rickettsia azadi) protein is Acyl-[acyl-carrier-protein]--UDP-N-acetylglucosamine O-acyltransferase.